Here is a 1407-residue protein sequence, read N- to C-terminus: DNA-directed RNA polymerase subunit beta' (1407 aa).

Residues C70, C72, C85, and C88 each coordinate Zn(2+). 3 residues coordinate Mg(2+): D460, D462, and D464. 4 residues coordinate Zn(2+): C814, C888, C895, and C898. N6-acetyllysine is present on K972.

Belongs to the RNA polymerase beta' chain family. In terms of assembly, the RNAP catalytic core consists of 2 alpha, 1 beta, 1 beta' and 1 omega subunit. When a sigma factor is associated with the core the holoenzyme is formed, which can initiate transcription. Mg(2+) serves as cofactor. Requires Zn(2+) as cofactor.

It carries out the reaction RNA(n) + a ribonucleoside 5'-triphosphate = RNA(n+1) + diphosphate. In terms of biological role, DNA-dependent RNA polymerase catalyzes the transcription of DNA into RNA using the four ribonucleoside triphosphates as substrates. This Shigella sonnei (strain Ss046) protein is DNA-directed RNA polymerase subunit beta'.